The primary structure comprises 389 residues: NAD-dependent protein deacetylase sirtuin-2 (389 aa).

A disordered region spans residues 1–34; that stretch reads MAEPDPSHPLETQAGKVQEAQDSDSDSEGGAAGG. Alanine 2 carries the post-translational modification N-acetylalanine. 4 positions are modified to phosphoserine: serine 23, serine 25, serine 27, and serine 53. Residues 57 to 338 enclose the Deacetylase sirtuin-type domain; the sequence is RLLDELTLEG…LALAELLGWK (282 aa). NAD(+) is bound by residues 85 to 89 and 95 to 97; these read AGIST and DFR. The residue at position 100 (serine 100) is a Phosphoserine. Residue 167 to 170 coordinates NAD(+); the sequence is QNID. Catalysis depends on histidine 187, which acts as the Proton acceptor. Residues cysteine 195 and cysteine 200 each coordinate Zn(2+). Serine 207 is modified (phosphoserine). Positions 221 and 224 each coordinate Zn(2+). NAD(+) is bound by residues 262–263, 286–288, and cysteine 324; these read TS and NKE. Positions 350-389 are disordered; that stretch reads ASIDAQSGAEAPNPSTSASPRKSPPPAQDEARTTEREKPQ. Phosphoserine is present on residues serine 368 and serine 372. Positions 378-389 are enriched in basic and acidic residues; it reads DEARTTEREKPQ.

It belongs to the sirtuin family. Class I subfamily. As to quaternary structure, interacts with CDC20, FOXO3 and FZR1. Associates with microtubules in primary cortical mature neurons. Homotrimer. Interacts (via both phosphorylated, unphosphorylated, active or inactive forms) with HDAC6; the interaction is necessary for the complex to interact with alpha-tubulin, suggesting that these proteins belong to a large complex that deacetylates the cytoskeleton. Interacts with FOXO1; the interaction is disrupted upon serum-starvation or oxidative stress, leading to increased level of acetylated FOXO1 and induction of autophagy. Interacts with RELA; the interaction occurs in the cytoplasm and is increased in a TNF-alpha-dependent manner. Interacts with HOXA10; the interaction is direct. Interacts with YWHAB and YWHAG; the interactions occur in a AKT-dependent manner and increase SIRT2-dependent TP53 deacetylation. Interacts with MAPK1/ERK2 and MAPK3/ERK1; the interactions increase SIRT2 stability and deacetylation activity. Interacts (phosphorylated form) with KMT5A isoform 2; the interaction is direct, stimulates KMT5A-mediated methyltransferase activity on histone at 'Lys-20' (H4K20me1) and is increased in a H(2)O(2)-induced oxidative stress-dependent manner. Interacts with G6PD; the interaction is enhanced by H(2)O(2) treatment. Interacts with a G1/S-specific cyclin E-CDK2 complex. Interacts with AURKA, CDK5R1 (p35 form) and CDK5 and HIF1A. Interacts with the tRNA ligase SARS1; recruited to the VEGFA promoter via interaction with SARS1. Interacts with BEX4; negatively regulates alpha-tubulin deacetylation by SIRT2. Zn(2+) is required as a cofactor. Post-translationally, phosphorylated at phosphoserine and phosphothreonine. Phosphorylated at Ser-368 by a mitotic kinase CDK1/cyclin B at the G2/M transition; phosphorylation regulates the delay in cell-cycle progression. Phosphorylated at Ser-368 by a mitotic kinase G1/S-specific cyclin E/Cdk2 complex; phosphorylation inactivates SIRT2-mediated alpha-tubulin deacetylation and thereby negatively regulates cell adhesion, cell migration and neurite outgrowth during neuronal differentiation. Phosphorylated by cyclin A/Cdk2 and p35-Cdk5 complexes and to a lesser extent by the cyclin D3/Cdk4 and cyclin B/Cdk1, in vitro. Dephosphorylated at Ser-368 by CDC14A and CDC14B around early anaphase. Acetylated by EP300; acetylation leads both to the decreased of SIRT2-mediated alpha-tubulin deacetylase activity and SIRT2-mediated down-regulation of TP53 transcriptional activity. In terms of processing, ubiquitinated.

The protein localises to the nucleus. It localises to the cytoplasm. Its subcellular location is the perinuclear region. It is found in the cytoskeleton. The protein resides in the microtubule organizing center. The protein localises to the centrosome. It localises to the centriole. Its subcellular location is the spindle. It is found in the midbody. The protein resides in the chromosome. The protein localises to the perikaryon. It localises to the cell projection. Its subcellular location is the growth cone. It is found in the myelin membrane. It catalyses the reaction N(6)-acetyl-L-lysyl-[protein] + NAD(+) + H2O = 2''-O-acetyl-ADP-D-ribose + nicotinamide + L-lysyl-[protein]. The enzyme catalyses N(6)-tetradecanoyl-L-lysyl-[protein] + NAD(+) + H2O = 2''-O-tetradecanoyl-ADP-D-ribose + nicotinamide + L-lysyl-[protein]. The catalysed reaction is N(6)-hexadecanoyl-L-lysyl-[protein] + NAD(+) + H2O = 2''-O-hexadecanoyl-ADP-D-ribose + nicotinamide + L-lysyl-[protein]. With respect to regulation, inhibited by Sirtinol, A3 and M15 small molecules. Inhibited by nicotinamide. In terms of biological role, NAD-dependent protein deacetylase, which deacetylates internal lysines on histone and alpha-tubulin as well as many other proteins such as key transcription factors. Participates in the modulation of multiple and diverse biological processes such as cell cycle control, genomic integrity, microtubule dynamics, cell differentiation, metabolic networks, and autophagy. Plays a major role in the control of cell cycle progression and genomic stability. Functions in the antephase checkpoint preventing precocious mitotic entry in response to microtubule stress agents, and hence allowing proper inheritance of chromosomes. Positively regulates the anaphase promoting complex/cyclosome (APC/C) ubiquitin ligase complex activity by deacetylating CDC20 and FZR1, then allowing progression through mitosis. Associates both with chromatin at transcriptional start sites (TSSs) and enhancers of active genes. Plays a role in cell cycle and chromatin compaction through epigenetic modulation of the regulation of histone H4 'Lys-20' methylation (H4K20me1) during early mitosis. Specifically deacetylates histone H4 at 'Lys-16' (H4K16ac) between the G2/M transition and metaphase enabling H4K20me1 deposition by KMT5A leading to ulterior levels of H4K20me2 and H4K20me3 deposition throughout cell cycle, and mitotic S-phase progression. Deacetylates KMT5A modulating KMT5A chromatin localization during the mitotic stress response. Also deacetylates histone H3 at 'Lys-57' (H3K56ac) during the mitotic G2/M transition. During oocyte meiosis progression, may deacetylate histone H4 at 'Lys-16' (H4K16ac) and alpha-tubulin, regulating spindle assembly and chromosome alignment by influencing microtubule dynamics and kinetochore function. Deacetylates histone H4 at 'Lys-16' (H4K16ac) at the VEGFA promoter and thereby contributes to regulate expression of VEGFA, a key regulator of angiogenesis. Deacetylates alpha-tubulin at 'Lys-40' and hence controls neuronal motility, oligodendroglial cell arbor projection processes and proliferation of non-neuronal cells. Phosphorylation at Ser-368 by a G1/S-specific cyclin E-CDK2 complex inactivates SIRT2-mediated alpha-tubulin deacetylation, negatively regulating cell adhesion, cell migration and neurite outgrowth during neuronal differentiation. Deacetylates PARD3 and participates in the regulation of Schwann cell peripheral myelination formation during early postnatal development and during postinjury remyelination. Involved in several cellular metabolic pathways. Plays a role in the regulation of blood glucose homeostasis by deacetylating and stabilizing phosphoenolpyruvate carboxykinase PCK1 activity in response to low nutrient availability. Acts as a key regulator in the pentose phosphate pathway (PPP) by deacetylating and activating the glucose-6-phosphate G6PD enzyme, and therefore, stimulates the production of cytosolic NADPH to counteract oxidative damage. Maintains energy homeostasis in response to nutrient deprivation as well as energy expenditure by inhibiting adipogenesis and promoting lipolysis. Attenuates adipocyte differentiation by deacetylating and promoting FOXO1 interaction to PPARG and subsequent repression of PPARG-dependent transcriptional activity. Plays a role in the regulation of lysosome-mediated degradation of protein aggregates by autophagy in neuronal cells. Deacetylates FOXO1 in response to oxidative stress or serum deprivation, thereby negatively regulating FOXO1-mediated autophagy. Deacetylates a broad range of transcription factors and co-regulators regulating target gene expression. Deacetylates transcriptional factor FOXO3 stimulating the ubiquitin ligase SCF(SKP2)-mediated FOXO3 ubiquitination and degradation. Deacetylates HIF1A and therefore promotes HIF1A degradation and inhibition of HIF1A transcriptional activity in tumor cells in response to hypoxia. Deacetylates RELA in the cytoplasm inhibiting NF-kappaB-dependent transcription activation upon TNF-alpha stimulation. Inhibits transcriptional activation by deacetylating p53/TP53 and EP300. Also deacetylates EIF5A. Functions as a negative regulator on oxidative stress-tolerance in response to anoxia-reoxygenation conditions. Plays a role as tumor suppressor. In addition to protein deacetylase activity, also has activity toward long-chain fatty acyl groups and mediates protein-lysine demyristoylation and depalmitoylation of target proteins, such as ARF6 and KRAS, thereby regulating their association with membranes. The sequence is that of NAD-dependent protein deacetylase sirtuin-2 (SIRT2) from Macaca fascicularis (Crab-eating macaque).